The following is a 231-amino-acid chain: Uridylate kinase (231 aa).

Position 6–9 (6–9 (KLSG)) interacts with ATP. Residues 14 to 19 (GEGGRG) form an involved in allosteric activation by GTP region. Positions 49 and 53 each coordinate ATP. Residues Asp-66 and 127 to 134 (TSNPFFTT) each bind UMP. ATP contacts are provided by Thr-154, Tyr-160, and Asp-163.

It belongs to the UMP kinase family. Homohexamer.

It is found in the cytoplasm. The catalysed reaction is UMP + ATP = UDP + ADP. The protein operates within pyrimidine metabolism; CTP biosynthesis via de novo pathway; UDP from UMP (UMPK route): step 1/1. Allosterically activated by GTP. Inhibited by UTP. In terms of biological role, catalyzes the reversible phosphorylation of UMP to UDP. The chain is Uridylate kinase from Thermotoga maritima (strain ATCC 43589 / DSM 3109 / JCM 10099 / NBRC 100826 / MSB8).